The chain runs to 942 residues: Isoleucine--tRNA ligase (942 aa).

Positions 58–68 match the 'HIGH' region motif; it reads PYANGDIHIGH. E566 contributes to the L-isoleucyl-5'-AMP binding site. The 'KMSKS' region motif lies at 607-611; the sequence is KMSKS. ATP is bound at residue K610. Residues C905, C908, C925, and C928 each coordinate Zn(2+).

The protein belongs to the class-I aminoacyl-tRNA synthetase family. IleS type 1 subfamily. As to quaternary structure, monomer. Zn(2+) is required as a cofactor.

The protein resides in the cytoplasm. The enzyme catalyses tRNA(Ile) + L-isoleucine + ATP = L-isoleucyl-tRNA(Ile) + AMP + diphosphate. Its function is as follows. Catalyzes the attachment of isoleucine to tRNA(Ile). As IleRS can inadvertently accommodate and process structurally similar amino acids such as valine, to avoid such errors it has two additional distinct tRNA(Ile)-dependent editing activities. One activity is designated as 'pretransfer' editing and involves the hydrolysis of activated Val-AMP. The other activity is designated 'posttransfer' editing and involves deacylation of mischarged Val-tRNA(Ile). In Vibrio parahaemolyticus serotype O3:K6 (strain RIMD 2210633), this protein is Isoleucine--tRNA ligase.